The following is a 337-amino-acid chain: Ferredoxin--NADP reductase (337 aa).

FAD is bound by residues Glu-42, Gln-50, Tyr-55, Val-97, Phe-130, Asp-292, and Thr-333.

It belongs to the ferredoxin--NADP reductase type 2 family. In terms of assembly, homodimer. The cofactor is FAD.

It catalyses the reaction 2 reduced [2Fe-2S]-[ferredoxin] + NADP(+) + H(+) = 2 oxidized [2Fe-2S]-[ferredoxin] + NADPH. This chain is Ferredoxin--NADP reductase, found in Streptococcus mutans serotype c (strain ATCC 700610 / UA159).